Here is a 496-residue protein sequence, read N- to C-terminus: Glycylpeptide N-tetradecanoyltransferase 1 (496 aa).

The disordered stretch occupies residues 1 to 82 (MADESETAVK…SAQDQPVKMN (82 aa)). Residues Ser-31 and Ser-47 each carry the phosphoserine modification. A compositionally biased stretch (basic residues) spans 55–66 (KKKKKKQKKKKE). Ser-83 carries the phosphoserine modification. Tetradecanoyl-CoA contacts are provided by Gln-118, Phe-119, Trp-120, Phe-247, Leu-248, Cys-249, Val-250, Ser-256, Arg-258, Val-259, and Ala-260.

The protein belongs to the NMT family. As to expression, heart, gut, kidney, liver and placenta.

The protein localises to the cytoplasm. The protein resides in the cytosol. Its subcellular location is the membrane. It carries out the reaction N-terminal glycyl-[protein] + tetradecanoyl-CoA = N-tetradecanoylglycyl-[protein] + CoA + H(+). It catalyses the reaction N-terminal glycyl-L-lysyl-[protein] + tetradecanoyl-CoA = N-terminal glycyl-(N(6)-tetradecanoyl)-L-lysyl-[protein] + CoA + H(+). Functionally, adds a myristoyl group to the N-terminal glycine residue of certain cellular and viral proteins. Also able to mediate N-terminal lysine myristoylation of proteins: catalyzes myristoylation of ARF6 on both 'Gly-2' and 'Lys-3'. Lysine myristoylation is required to maintain ARF6 on membranes during the GTPase cycle. The polypeptide is Glycylpeptide N-tetradecanoyltransferase 1 (Homo sapiens (Human)).